Here is a 114-residue protein sequence, read N- to C-terminus: uncharacterized protein (114 aa).

Residue C10 is part of the active site.

This sequence belongs to the ArsC family.

This is an uncharacterized protein from Haemophilus influenzae (strain ATCC 51907 / DSM 11121 / KW20 / Rd).